We begin with the raw amino-acid sequence, 402 residues long: Argininosuccinate synthase (402 aa).

Residues 10–18 (AYSGGVDTS) and alanine 38 contribute to the ATP site. Residue tyrosine 89 coordinates L-citrulline. Glycine 119 lines the ATP pocket. The L-aspartate site is built by threonine 121, asparagine 125, and aspartate 126. Asparagine 125 contacts L-citrulline. Residues arginine 129, serine 177, serine 186, glutamate 262, and tyrosine 274 each coordinate L-citrulline.

Belongs to the argininosuccinate synthase family. Type 1 subfamily. Homotetramer.

The protein resides in the cytoplasm. It carries out the reaction L-citrulline + L-aspartate + ATP = 2-(N(omega)-L-arginino)succinate + AMP + diphosphate + H(+). It functions in the pathway amino-acid biosynthesis; L-arginine biosynthesis; L-arginine from L-ornithine and carbamoyl phosphate: step 2/3. This chain is Argininosuccinate synthase, found in Prochlorococcus marinus (strain SARG / CCMP1375 / SS120).